Reading from the N-terminus, the 409-residue chain is MAIEILVPDLPESVADATVATWHKKLGDTVKRDEVIVEIETDKVVLEVPALSDGVLAEVVQAEGETVVSKQLLGKISTAQEGDVSSATLKATNEPTPSDRQNAAIENSHNHNADQSPVIRRLLAEHDLQADQIQGSGVGGRLTREDIEREIAKRQAQQVKQEAATEQNTISTVAYSARSEKRVPMTRLRKRIAERLLEAKNSTAMLTTFNEVDMQPIMTLRKTYGEKFEKQHSVRLGFMSFYIKAVVEALKRYPEVNASIDGDDVVYHNYFDISIAVSTPRGLVTPVLRDCDKLSMAEIEKQIKALAEKGRDGKLTVEDLTGGNFTITNGGVFGSLMSTPIINPPQSAILGMHAIKERPIALNGQVVIRPMMYLALSYDHRLIDGRESVGFLVTIKELLEDPTRLLLEI.

The region spanning 2–77 (AIEILVPDLP…VSKQLLGKIS (76 aa)) is the Lipoyl-binding domain. Residue Lys43 is modified to N6-lipoyllysine. Residues 83–107 (DVSSATLKATNEPTPSDRQNAAIEN) show a composition bias toward polar residues. The segment at 83–114 (DVSSATLKATNEPTPSDRQNAAIENSHNHNAD) is disordered. Residues 114-151 (DQSPVIRRLLAEHDLQADQIQGSGVGGRLTREDIEREI) form the Peripheral subunit-binding (PSBD) domain. Residues His380 and Asp384 contribute to the active site.

The protein belongs to the 2-oxoacid dehydrogenase family. In terms of assembly, forms a 24-polypeptide structural core with octahedral symmetry. Part of the 2-oxoglutarate dehydrogenase (OGDH) complex composed of E1 (2-oxoglutarate dehydrogenase), E2 (dihydrolipoamide succinyltransferase) and E3 (dihydrolipoamide dehydrogenase); the complex contains multiple copies of the three enzymatic components (E1, E2 and E3). (R)-lipoate serves as cofactor.

The catalysed reaction is N(6)-[(R)-dihydrolipoyl]-L-lysyl-[protein] + succinyl-CoA = N(6)-[(R)-S(8)-succinyldihydrolipoyl]-L-lysyl-[protein] + CoA. Its pathway is amino-acid degradation; L-lysine degradation via saccharopine pathway; glutaryl-CoA from L-lysine: step 6/6. E2 component of the 2-oxoglutarate dehydrogenase (OGDH) complex which catalyzes the second step in the conversion of 2-oxoglutarate to succinyl-CoA and CO(2). The polypeptide is Dihydrolipoyllysine-residue succinyltransferase component of 2-oxoglutarate dehydrogenase complex (sucB) (Haemophilus influenzae (strain ATCC 51907 / DSM 11121 / KW20 / Rd)).